We begin with the raw amino-acid sequence, 239 residues long: uncharacterized protein (239 aa).

A signal peptide spans 1 to 19 (MPLLHRTIIFLQLLGTISS). N-linked (GlcNAc...) asparagine glycans are attached at residues asparagine 44, asparagine 58, asparagine 72, asparagine 92, asparagine 109, asparagine 136, asparagine 172, asparagine 192, and asparagine 213.

Its subcellular location is the secreted. This is an uncharacterized protein from Caenorhabditis elegans.